We begin with the raw amino-acid sequence, 170 residues long: Peptide deformylase 2 (170 aa).

Residues C94 and H136 each contribute to the Fe cation site. E137 is an active-site residue. H140 is a binding site for Fe cation.

The protein belongs to the polypeptide deformylase family. The cofactor is Fe(2+).

The enzyme catalyses N-terminal N-formyl-L-methionyl-[peptide] + H2O = N-terminal L-methionyl-[peptide] + formate. In terms of biological role, removes the formyl group from the N-terminal Met of newly synthesized proteins. Requires at least a dipeptide for an efficient rate of reaction. N-terminal L-methionine is a prerequisite for activity but the enzyme has broad specificity at other positions. The polypeptide is Peptide deformylase 2 (Xanthomonas axonopodis pv. citri (strain 306)).